A 341-amino-acid polypeptide reads, in one-letter code: Eukaryotic translation initiation factor 2 subunit 1 (341 aa).

One can recognise an S1 motif domain in the interval 18–89; it reads NELVMVRIES…DKGYIDLSKR (72 aa). A disordered region spans residues 301–341; it reads LMEQLEVENQDGDGEEHEDDDDDDDDEEEEEKPKEKKSSRK. The span at 303–330 shows a compositional bias: acidic residues; sequence EQLEVENQDGDGEEHEDDDDDDDDEEEE. Residues 331 to 341 are compositionally biased toward basic and acidic residues; that stretch reads EKPKEKKSSRK.

The protein belongs to the eIF-2-alpha family. Eukaryotic translation initiation factor 2 eIF2 is a heterotrimeric complex composed of an alpha, a beta and a gamma subunit.

It is found in the cytoplasm. Its subcellular location is the cytosol. In terms of biological role, eIF-2 functions in the early steps of protein synthesis by forming a ternary complex with GTP and initiator tRNA. This complex binds to a 40S ribosomal subunit, followed by mRNA binding to form a 43S pre-initiation complex. Junction of the 60S ribosomal subunit to form the 80S initiation complex is preceded by hydrolysis of the GTP bound to eIF-2 and release of an eIF-2-GDP binary complex. In order for eIF-2 to recycle and catalyze another round of initiation, the GDP bound to eIF-2 must exchange with GTP by way of a reaction catalyzed by eIF2B. This Dictyostelium discoideum (Social amoeba) protein is Eukaryotic translation initiation factor 2 subunit 1 (eif2s1).